The primary structure comprises 1048 residues: Histone deacetylase complex subunit SAP130 (1048 aa).

Residues 1–95 (MGPPRHPQAG…LQSREEKQEP (95 aa)) are disordered. Polar residues predominate over residues 40–54 (TGLSQAPSQIANSGS). Over residues 67–80 (ESGRDSEVSAREHM) the composition is skewed to basic and acidic residues. Omega-N-methylarginine is present on R232. At T355 the chain carries Phosphothreonine. S442 and S465 each carry phosphoserine. 3 disordered regions span residues 458–477 (PISG…RSDN), 576–617 (IGTP…PEGK), and 649–687 (QTHS…SEIH). Composition is skewed to polar residues over residues 590–613 (GIHS…QQPQ) and 649–667 (QTHS…SSPR). K785 participates in a covalent cross-link: Glycyl lysine isopeptide (Lys-Gly) (interchain with G-Cter in SUMO2). The tract at residues 819–871 (LSMPTSDLPPGASPRKKPRKQQHVISTEEGDMMETNSTDDEKSTAKSLLVKAE) is disordered. The tract at residues 836–1047 (PRKQQHVIST…KVSKLKRKEK (212 aa)) is interactions with SIN3A and HDAC1. Phosphoserine is present on S855. Residue T856 is modified to Phosphothreonine. Residues K864 and K869 each participate in a glycyl lysine isopeptide (Lys-Gly) (interchain with G-Cter in SUMO2) cross-link. S875 carries the phosphoserine modification.

It belongs to the SAP130 family. As to quaternary structure, component of a mSin3A corepressor complex that contains SIN3A, SAP130, SUDS3/SAP45, ARID4B/SAP180, HDAC1 and HDAC2. Interacts (released by dead or dying cells) with CLEC4E. Post-translationally, acetylated. In terms of processing, sumoylated with SUMO1. Expressed in various cancer cell ines.

It is found in the nucleus. In terms of biological role, acts as a transcriptional repressor. May function in the assembly and/or enzymatic activity of the mSin3A corepressor complex or in mediating interactions between the complex and other regulatory complexes. In Homo sapiens (Human), this protein is Histone deacetylase complex subunit SAP130 (SAP130).